Here is a 283-residue protein sequence, read N- to C-terminus: 4-diphosphocytidyl-2-C-methyl-D-erythritol kinase (283 aa).

Lys10 is a catalytic residue. 94 to 104 (PVAAGLAGGSS) is a binding site for ATP. The active site involves Asp136.

This sequence belongs to the GHMP kinase family. IspE subfamily.

It catalyses the reaction 4-CDP-2-C-methyl-D-erythritol + ATP = 4-CDP-2-C-methyl-D-erythritol 2-phosphate + ADP + H(+). It participates in isoprenoid biosynthesis; isopentenyl diphosphate biosynthesis via DXP pathway; isopentenyl diphosphate from 1-deoxy-D-xylulose 5-phosphate: step 3/6. Its function is as follows. Catalyzes the phosphorylation of the position 2 hydroxy group of 4-diphosphocytidyl-2C-methyl-D-erythritol. The sequence is that of 4-diphosphocytidyl-2-C-methyl-D-erythritol kinase from Enterococcus faecalis (strain ATCC 700802 / V583).